Reading from the N-terminus, the 217-residue chain is MAAGSRTSLLLAFALLCLPWLQEAGAVQTVPLSRLFDHAMLQAHRAHQLAIDTYQEFEETYIPKDQKYSFLHDSQTSFCFSDSIPTPSNMEETQQKSNLELLRISLLLIESWLEPVRFLRSMFANNLVYDTSDSDDYHLLKDLEEGIQTLMGRLEDGSRRTGQILKQTYSKFDTNSHNHDALLKNYGLLYCFRKDMDKVETFLRMVQCRSVEGSCGF.

A signal peptide spans 1 to 26 (MAAGSRTSLLLAFALLCLPWLQEAGA). His44 provides a ligand contact to Zn(2+). Cysteines 79 and 191 form a disulfide. Glu200 is a Zn(2+) binding site. An intrachain disulfide couples Cys208 to Cys215.

It belongs to the somatotropin/prolactin family. As to quaternary structure, can be found in a monomeric as well as dimeric form.

It localises to the secreted. In terms of biological role, produced only during pregnancy and is involved in stimulating lactation, fetal growth and metabolism. Does not interact with GHR but only activates PRLR through zinc-induced dimerization. The sequence is that of Chorionic somatomammotropin hormone 2 (CSH2) from Homo sapiens (Human).